Consider the following 340-residue polypeptide: Olfactory receptor 5T3 (340 aa).

The Extracellular segment spans residues 1-55; sequence MDSTFTGYNLYNLQVKTEMDKLSSGLDIYRNPLKNKTEVTMFILTGFTDDFELQV. N35 carries N-linked (GlcNAc...) asparagine glycosylation. Residues 56–76 form a helical membrane-spanning segment; it reads FLFLLFFAIYLFTLIGNLGLV. The Cytoplasmic portion of the chain corresponds to 77–84; that stretch reads VLVIEDSW. A helical transmembrane segment spans residues 85-105; it reads LHNPMYYFLSVLSFLDACYST. The Extracellular portion of the chain corresponds to 106 to 129; that stretch reads VVTPKMLVNFLAKNKSISFIGCAT. A glycan (N-linked (GlcNAc...) asparagine) is linked at N119. C127 and C219 form a disulfide bridge. The helical transmembrane segment at 130–150 threads the bilayer; that stretch reads QMLLFVTFGTTECFLLAAMAY. At 151-169 the chain is on the cytoplasmic side; it reads DHYVAIYNPLLYSVSMSPR. A helical transmembrane segment spans residues 170–190; sequence VYVPLITASYVAGILHATIHI. Over 191-226 the chain is Extracellular; that stretch reads VATFSLSFCGSNEIRHVFCDMPPLLAISCSDTHTNQ. A helical membrane pass occupies residues 227–247; the sequence is LLLFYFVGSIEIVTILIVLIS. Residues 248–267 are Cytoplasmic-facing; it reads CDFILLSILKMHSAKGRQKA. A helical membrane pass occupies residues 268–288; sequence FSTCGSHLTGVTIYHGTILVS. Topologically, residues 289 to 301 are extracellular; sequence YMRPSSSYASDHD. The helical transmembrane segment at 302 to 322 threads the bilayer; the sequence is IIVSIFYTIVIPKLNPIIYSL. The Cytoplasmic portion of the chain corresponds to 323-340; it reads RNKEVKKAVKKMLKLVYK.

It belongs to the G-protein coupled receptor 1 family.

The protein localises to the cell membrane. Functionally, odorant receptor. The polypeptide is Olfactory receptor 5T3 (OR5T3) (Homo sapiens (Human)).